The sequence spans 604 residues: Putative sodium-dependent multivitamin transporter (604 aa).

6 consecutive transmembrane segments (helical) span residues 4–24 (LGAWDYTILAVVLIISVAIGI), 48–68 (VAPVAFSLMASFMSAVTILGV), 78–98 (MFVVINLSYVLSTPVAAYLII), 134–154 (VLYMGIVVYAPALALEAVTGL), 160–180 (IVIVGVVCTFYATLGGMKAVL), and 188–208 (LLMFAAVFSVIICAWVKAGSL). Residues asparagine 222 and asparagine 225 are each glycosylated (N-linked (GlcNAc...) asparagine). The next 7 membrane-spanning stretches (helical) occupy residues 234–254 (HTWFTQILGGCATYLAIYGVN), 273–293 (ALWWCLPILCLLSLSTCFSGL), 331–351 (LAGLFVSGIFCASLSTISSII), 389–409 (LFFGALCIGMAFMAGSIGGLL), 413–433 (LSIFGIIGGPLLGLFTLGMYV), 440–460 (GAIGGLLISLAFCFWIGFGQP), and 511–531 (ALGFLITFFGGWLLSWLFALL).

This sequence belongs to the sodium:solute symporter (SSF) (TC 2.A.21) family.

The protein resides in the cell membrane. In Drosophila melanogaster (Fruit fly), this protein is Putative sodium-dependent multivitamin transporter.